The following is a 343-amino-acid chain: Nicotianamine synthase 3 (343 aa).

Belongs to the nicotianamine synthase (NAS)-like family. Expressed in leaves.

It carries out the reaction 3 S-adenosyl-L-methionine = nicotianamine + 3 S-methyl-5'-thioadenosine + 3 H(+). Its function is as follows. Synthesizes nicotianamine, a polyamine that is the first intermediate in the synthesis of the phytosiderophores of the mugineic acid type found in gramineae which serve as a sensor for the physiological iron status within the plant, and/or might be involved in the transport of iron. This is Nicotianamine synthase 3 (NAS3) from Oryza sativa subsp. indica (Rice).